A 552-amino-acid polypeptide reads, in one-letter code: DnaJ homolog subfamily C member 1 (552 aa).

The signal sequence occupies residues 1 to 43 (MWVPGFGSARLPQRRRSGLESSSVRPLWLLLLFLLAAVRPVRA). Topologically, residues 44 to 149 (WESGDLELFD…RRVRKMSNAE (106 aa)) are lumenal. The J domain maps to 56–129 (EEVQLNFYEF…RYDDVLINGL (74 aa)). Residues 150–170 (LALLLFIILTVGHYAVVWSIY) traverse the membrane as a helical segment. Residues 171-552 (LEKQLDELLG…LVQKKKQAKS (382 aa)) are Cytoplasmic-facing. Positions 323-377 (RQAPEWTEEDLSQLTRSMVKFPGGTPGRWDKIAHELGRSVTDVTTKAKELKDSVT) constitute an SANT 1 domain. The tract at residues 370–495 (KELKDSVTSS…ERTRAAEEAW (126 aa)) is disordered. The residue at position 379 (serine 379) is a Phosphoserine. Residues 419–431 (MEDEEHEAAEGEQ) are compositionally biased toward acidic residues. Residues 453–470 (TRVEPEEKLRGKRQKDFD) show a composition bias toward basic and acidic residues. A phosphoserine mark is found at serine 477 and serine 478. A compositionally biased stretch (basic and acidic residues) spans 480 to 492 (EEKQRKERTRAAE). One can recognise an SANT 2 domain in the interval 490–545 (AAEEAWTQSQQKLLELALQQYPKGASDRWDKIAKCVPSKSKEDCIARYKLLVELVQ).

As to quaternary structure, interacts (via J domain) with HSPA5. Interacts (via cytosolic domain) with ribosomes. Interacts (via SANT 2 domain) with SERPINA3; the interaction delays the formation of the covalent inhibitory complex SERPINA3-chymotrypsin, but does not alter the catalytic activity of SERPINA3. Interacts (via SANT 2 domain) with ITIH4 (via C-terminus); the interaction protects ITIH4 against in vitro cleavage by kallikrein. Widely expressed.

It localises to the endoplasmic reticulum membrane. The protein resides in the nucleus membrane. Its subcellular location is the microsome membrane. In terms of biological role, may modulate protein synthesis. The polypeptide is DnaJ homolog subfamily C member 1 (Dnajc1) (Mus musculus (Mouse)).